Consider the following 182-residue polypeptide: Peptidyl-prolyl cis-trans isomerase ssp-1 (182 aa).

One can recognise a WW domain in the interval Thr-7–Gly-41. The 112-residue stretch at Gln-71–Glu-182 folds into the PpiC domain.

The catalysed reaction is [protein]-peptidylproline (omega=180) = [protein]-peptidylproline (omega=0). Its function is as follows. Site-specific PPIase with respect to the amino acid N-terminal to the proline residue. Peptides with glutamate, phosphoserine, or phosphothreonine in the -1 position are the best substrates. It is not only able to isomerize small peptides but is also active in protein folding. In Neurospora crassa (strain ATCC 24698 / 74-OR23-1A / CBS 708.71 / DSM 1257 / FGSC 987), this protein is Peptidyl-prolyl cis-trans isomerase ssp-1 (ssp-1).